A 474-amino-acid polypeptide reads, in one-letter code: Serine--tRNA ligase (474 aa).

Position 278–280 (278–280) interacts with L-serine; it reads TAE. 309–311 is an ATP binding site; it reads RSE. L-serine is bound at residue Glu-332. 396-399 lines the ATP pocket; sequence EISS. An L-serine-binding site is contributed by Ser-432.

This sequence belongs to the class-II aminoacyl-tRNA synthetase family. Type-1 seryl-tRNA synthetase subfamily. Homodimer. The tRNA molecule binds across the dimer.

The protein localises to the cytoplasm. It catalyses the reaction tRNA(Ser) + L-serine + ATP = L-seryl-tRNA(Ser) + AMP + diphosphate + H(+). The enzyme catalyses tRNA(Sec) + L-serine + ATP = L-seryl-tRNA(Sec) + AMP + diphosphate + H(+). Its pathway is aminoacyl-tRNA biosynthesis; selenocysteinyl-tRNA(Sec) biosynthesis; L-seryl-tRNA(Sec) from L-serine and tRNA(Sec): step 1/1. Functionally, catalyzes the attachment of serine to tRNA(Ser). Is also able to aminoacylate tRNA(Sec) with serine, to form the misacylated tRNA L-seryl-tRNA(Sec), which will be further converted into selenocysteinyl-tRNA(Sec). This chain is Serine--tRNA ligase, found in Caulobacter sp. (strain K31).